The chain runs to 347 residues: NADH-ubiquinone oxidoreductase chain 2 (347 aa).

The next 10 helical transmembrane spans lie at 3-23 (PLTLIIIMFTLFMGTMITVFS), 59-79 (YFLTQATASMILMMAITLNIL), 95-115 (PVLITLALIIKLGMAPFHFWV), 127-147 (GLILLTWQKLAPLSILYQISP), 149-169 (INPTMMMSVAILSIMVGGWGG), 178-198 (ILAYSSIAHMGWMAAIITFNP), 200-220 (TMVLNLIIYILMTIPMFMMFM), 241-261 (VSTILITLMSLGGLPPLTGFI), 274-294 (GNIILPTAMAMLALLNLYFYM), and 325-345 (LITPLIILSTMLLPLTPALSV).

Belongs to the complex I subunit 2 family. As to quaternary structure, core subunit of respiratory chain NADH dehydrogenase (Complex I) which is composed of 45 different subunits. Interacts with TMEM242.

The protein resides in the mitochondrion inner membrane. It carries out the reaction a ubiquinone + NADH + 5 H(+)(in) = a ubiquinol + NAD(+) + 4 H(+)(out). Its function is as follows. Core subunit of the mitochondrial membrane respiratory chain NADH dehydrogenase (Complex I) which catalyzes electron transfer from NADH through the respiratory chain, using ubiquinone as an electron acceptor. Essential for the catalytic activity and assembly of complex I. The chain is NADH-ubiquinone oxidoreductase chain 2 from Oryctolagus cuniculus (Rabbit).